Here is a 662-residue protein sequence, read N- to C-terminus: UvrABC system protein B (662 aa).

Positions 31–188 (DNIEGGEKAQ…NDLVDIQFER (158 aa)) constitute a Helicase ATP-binding domain. Residue 44-51 (GATGTGKT) coordinates ATP. The Beta-hairpin signature appears at 97–120 (YYDYYQPEAYVPSSDTYIEKDSSV). Residues 435-601 (QIDDLLGEIN…TIKKEIRDLI (167 aa)) enclose the Helicase C-terminal domain. Residues 626-661 (KELVKKLEKQMQEAVEVLDFELAAQIRDMMLEVKAL) form the UVR domain.

This sequence belongs to the UvrB family. In terms of assembly, forms a heterotetramer with UvrA during the search for lesions. Interacts with UvrC in an incision complex.

It is found in the cytoplasm. The UvrABC repair system catalyzes the recognition and processing of DNA lesions. A damage recognition complex composed of 2 UvrA and 2 UvrB subunits scans DNA for abnormalities. Upon binding of the UvrA(2)B(2) complex to a putative damaged site, the DNA wraps around one UvrB monomer. DNA wrap is dependent on ATP binding by UvrB and probably causes local melting of the DNA helix, facilitating insertion of UvrB beta-hairpin between the DNA strands. Then UvrB probes one DNA strand for the presence of a lesion. If a lesion is found the UvrA subunits dissociate and the UvrB-DNA preincision complex is formed. This complex is subsequently bound by UvrC and the second UvrB is released. If no lesion is found, the DNA wraps around the other UvrB subunit that will check the other stand for damage. This chain is UvrABC system protein B, found in Streptococcus pneumoniae (strain Taiwan19F-14).